Reading from the N-terminus, the 128-residue chain is Large ribosomal subunit protein bL20c (128 aa).

This sequence belongs to the bacterial ribosomal protein bL20 family.

The protein resides in the plastid. Its function is as follows. Binds directly to 23S ribosomal RNA and is necessary for the in vitro assembly process of the 50S ribosomal subunit. It is not involved in the protein synthesizing functions of that subunit. This is Large ribosomal subunit protein bL20c (rpl20) from Epifagus virginiana (Beechdrops).